Consider the following 474-residue polypeptide: Sestrin homolog (474 aa).

Belongs to the sestrin family.

It localises to the nucleus. The protein resides in the cytoplasm. May function as a negative feedback regulator of TOR function. The sequence is that of Sestrin homolog from Caenorhabditis elegans.